We begin with the raw amino-acid sequence, 97 residues long: Large ribosomal subunit protein eL21 (97 aa).

The protein belongs to the eukaryotic ribosomal protein eL21 family.

This Methanococcus vannielii (strain ATCC 35089 / DSM 1224 / JCM 13029 / OCM 148 / SB) protein is Large ribosomal subunit protein eL21.